Consider the following 485-residue polypeptide: Cysteine protease atg4da (485 aa).

Residues 22–46 (ASASSKRHLGHGAVPDGIREGSGEP) are disordered. The active-site Nucleophile is the C131. Catalysis depends on residues D368 and H370.

Belongs to the peptidase C54 family.

The protein localises to the cytoplasm. The enzyme catalyses [protein]-C-terminal L-amino acid-glycyl-phosphatidylethanolamide + H2O = [protein]-C-terminal L-amino acid-glycine + a 1,2-diacyl-sn-glycero-3-phosphoethanolamine. The catalysed reaction is [protein]-C-terminal L-amino acid-glycyl-phosphatidylserine + H2O = [protein]-C-terminal L-amino acid-glycine + a 1,2-diacyl-sn-glycero-3-phospho-L-serine. Cysteine protease that plays a key role in autophagy by mediating both proteolytic activation and delipidation of ATG8 family proteins. The protease activity is required for proteolytic activation of ATG8 family proteins to reveal a C-terminal glycine. Exposure of the glycine at the C-terminus is essential for ATG8 proteins conjugation to phosphatidylethanolamine (PE) and insertion to membranes, which is necessary for autophagy. In addition to the protease activity, also mediates delipidation of ATG8 family proteins. Catalyzes delipidation of PE-conjugated forms of ATG8 proteins during macroautophagy. Also involved in non-canonical autophagy, a parallel pathway involving conjugation of ATG8 proteins to single membranes at endolysosomal compartments, by catalyzing delipidation of ATG8 proteins conjugated to phosphatidylserine (PS). ATG4D plays a role in the autophagy-mediated neuronal homeostasis in the central nervous system. This chain is Cysteine protease atg4da, found in Danio rerio (Zebrafish).